The primary structure comprises 721 residues: Phosphomethylpyrimidine synthase (721 aa).

Residues Asn-256, Met-285, Tyr-314, His-350, 370 to 372 (SRG), 411 to 414 (DGMR), and Glu-450 each bind substrate. Zn(2+) is bound at residue His-454. Tyr-477 serves as a coordination point for substrate. His-518 lines the Zn(2+) pocket. [4Fe-4S] cluster contacts are provided by Cys-598, Cys-601, and Cys-606.

Belongs to the ThiC family. As to quaternary structure, homodimer. [4Fe-4S] cluster is required as a cofactor.

The catalysed reaction is 5-amino-1-(5-phospho-beta-D-ribosyl)imidazole + S-adenosyl-L-methionine = 4-amino-2-methyl-5-(phosphooxymethyl)pyrimidine + CO + 5'-deoxyadenosine + formate + L-methionine + 3 H(+). It participates in cofactor biosynthesis; thiamine diphosphate biosynthesis. Functionally, catalyzes the synthesis of the hydroxymethylpyrimidine phosphate (HMP-P) moiety of thiamine from aminoimidazole ribotide (AIR) in a radical S-adenosyl-L-methionine (SAM)-dependent reaction. The protein is Phosphomethylpyrimidine synthase of Shewanella oneidensis (strain ATCC 700550 / JCM 31522 / CIP 106686 / LMG 19005 / NCIMB 14063 / MR-1).